The chain runs to 347 residues: MREETVSWKYFKRDVVPFTAMIAIECTTVGSSILYKAATLRGFSFYVFVFYAYVGATLVLLLLSLIFGRSRSLPTAKSSLFFKIFLLALLGLTSRVAGCKGIEYSSPTLSSAISNLTPAFTFILAIFFRMEQVMLRSSATQAKIIGTIVSISGALVIVLYKGPKLLVAASFTSFESSWIIGGLLLGLQFLLLSVWFILQTHIMEIYPEEIAVVFCYNLCATLISGTVCLLVEKDLNSWQLKPGFSLASVIYSGLFDTSLGSVIHTWGLHVKGPVYISLFKPLSIAIAVAMAAIFLGDTLHLGSVIGSVILSFGFYTVIWGKAREDSTKTVSDSEQSLLLPSHDREED.

The next 10 helical transmembrane spans lie at 15–35, 47–67, 73–93, 108–128, 139–159, 178–198, 210–230, 243–263, 276–296, and 299–319; these read VVPF…SILY, VFVF…SLIF, LPTA…LGLT, TLSS…AIFF, ATQA…VIVL, WIIG…WFIL, IAVV…VCLL, GFSL…GSVI, ISLF…IFLG, and LHLG…TVIW. The region spanning 30-158 is the EamA 1 domain; it reads GSSILYKAAT…VSISGALVIV (129 aa). The EamA 2 domain occupies 216–317; the sequence is YNLCATLISG…VILSFGFYTV (102 aa).

This sequence belongs to the drug/metabolite transporter (DMT) superfamily. Plant drug/metabolite exporter (P-DME) (TC 2.A.7.4) family.

It localises to the membrane. The polypeptide is WAT1-related protein At4g15540 (Arabidopsis thaliana (Mouse-ear cress)).